The primary structure comprises 44 residues: Cytochrome b559 subunit beta (44 aa).

The helical transmembrane segment at 19-35 threads the bilayer; that stretch reads WLAIHGIAIPTVFFLGA. Heme is bound at residue H23.

The protein belongs to the PsbE/PsbF family. As to quaternary structure, heterodimer of an alpha subunit and a beta subunit. PSII is composed of 1 copy each of membrane proteins PsbA, PsbB, PsbC, PsbD, PsbE, PsbF, PsbH, PsbI, PsbJ, PsbK, PsbL, PsbM, PsbT, PsbX, PsbY, PsbZ, Psb30/Ycf12, at least 3 peripheral proteins of the oxygen-evolving complex and a large number of cofactors. It forms dimeric complexes. The cofactor is heme b.

Its subcellular location is the plastid. The protein localises to the chloroplast thylakoid membrane. Its function is as follows. This b-type cytochrome is tightly associated with the reaction center of photosystem II (PSII). PSII is a light-driven water:plastoquinone oxidoreductase that uses light energy to abstract electrons from H(2)O, generating O(2) and a proton gradient subsequently used for ATP formation. It consists of a core antenna complex that captures photons, and an electron transfer chain that converts photonic excitation into a charge separation. This is Cytochrome b559 subunit beta from Gracilaria tenuistipitata var. liui (Red alga).